A 135-amino-acid polypeptide reads, in one-letter code: MNEILKILNNIRTLRVHSRECSLEILEEILEKFKVVINERKKEEKKIKEEIAQRAIKLKKYREMLIADGINPNELLTKTNSIKSSEKRKRPKRPAKYKYINKNGDFKTWTGQGRTPSVIKNAILERKKILEDFLL.

A DNA-binding region spans residues Gln112 to Ser117.

It belongs to the histone-like protein H-NS family. In terms of assembly, homodimer that oligomerizes on DNA into higher-order complexes that form bridges between disparate regions of DNA compacting it.

Its subcellular location is the cytoplasm. The protein resides in the nucleoid. Functionally, a DNA-binding protein implicated in transcriptional repression and chromosome organization and compaction. Binds nucleation sites in AT-rich DNA and bridges them, forming higher-order nucleoprotein complexes and condensing the chromosome. A subset of genes are repressed by H-NS in association with other proteins. This chain is DNA-binding protein H-NS homolog (hns), found in Buchnera aphidicola subsp. Acyrthosiphon pisum (strain APS) (Acyrthosiphon pisum symbiotic bacterium).